The following is a 1679-amino-acid chain: AF4/FMR2 family member lilli (1679 aa).

Disordered regions lie at residues 1–21 (MAQQ…SSIN), 55–78 (NYNM…QQGI), 124–305 (RSAP…EKDV), 406–539 (LHQL…GAQN), 580–609 (MGAG…SNKW), 733–755 (DSGT…AVGG), 783–1172 (QPTQ…TTPH), and 1197–1319 (TPAQ…LQIG). Residues 69 to 78 (REKIERQQGI) show a composition bias toward basic and acidic residues. 2 stretches are compositionally biased toward low complexity: residues 144 to 181 (SLGH…QQQQ) and 212 to 244 (PSSS…SSGG). Residue T421 is modified to Phosphothreonine. The span at 429–442 (LKTEKNHSLEKQDS) shows a compositional bias: basic and acidic residues. A compositionally biased stretch (acidic residues) spans 444–455 (LENDLELSESED). Residues S451 and S453 each carry the phosphoserine modification. Positions 464–484 (SAGNSSNSSESDSSESGSESS) are enriched in low complexity. Positions 492–501 (HPNHQQHHHQ) are enriched in basic residues. Positions 502-532 (LQQQQQQQQQQASMQQQQVLQQQQQHRPQPL) are enriched in low complexity. A compositionally biased stretch (gly residues) spans 582 to 591 (AGSGSGGTLS). A compositionally biased stretch (polar residues) spans 598-609 (NKTPSPTESNKW). Low complexity predominate over residues 733-752 (DSGTSASGSSSSSSSSSDSA). Positions 783 to 796 (QPTQSQKAPPSNSV) are enriched in polar residues. Residues 810–820 (QRQKKPRKKKA) are compositionally biased toward basic residues. Phosphoserine is present on residues S829 and S830. Positions 859–871 (KKGRGRPRKQQQS) form a DNA-binding region, a.T hook. Positions 868-906 (QQQSGGSGNLSSASAGSSSQTKGPTLTAAKKPLAKTPLA) are enriched in low complexity. 2 positions are modified to phosphoserine: S879 and S881. The segment covering 917 to 927 (SQSSSNGNTPT) has biased composition (polar residues). Low complexity-rich tracts occupy residues 957 to 973 (SSSA…SSSS) and 1001 to 1012 (GSGSSSPSSSGS). Polar residues predominate over residues 1019–1030 (TRSQVGSGQALA). Residues 1042–1068 (SQHSQHLSSSECSSSSGGCTAVCSSSS) show a composition bias toward low complexity. Positions 1073–1090 (EGRREKERERKPKSDKNK) are enriched in basic and acidic residues. Residues 1130–1140 (QPPPPQAPPAA) are compositionally biased toward pro residues. Residues 1198–1213 (PAQQNGHLTPKDQATN) are compositionally biased toward polar residues. Composition is skewed to basic and acidic residues over residues 1234 to 1251 (EHPV…EAKF) and 1260 to 1288 (FQLK…EQPP). At S1368 the chain carries Phosphoserine. T1370 bears the Phosphothreonine mark. The segment covering 1569-1589 (GNTPSSISPSNSVGSQGSGSN) has biased composition (low complexity). The interval 1569–1594 (GNTPSSISPSNSVGSQGSGSNTPPGR) is disordered.

This sequence belongs to the AF4 family.

Its subcellular location is the nucleus. Has a role in transcriptional regulation. Acts in parallel with the Ras/MAPK and the PI3K/PKB pathways in the control of cell identity and cellular growth. Essential for regulation of the cytoskeleton and cell growth but not for cell proliferation or growth rate. Required specifically for the microtubule-based basal transport of lipid droplets. Plays a partially redundant function downstream of Raf in cell fate specification in the developing eye. Pair-rule protein that regulates embryonic cellularization, gastrulation and segmentation. In Drosophila erecta (Fruit fly), this protein is AF4/FMR2 family member lilli.